The following is a 1433-amino-acid chain: Probable ATP-dependent RNA helicase spindle-E (1433 aa).

A disordered region spans residues 76-98 (NRTLDELDSDDEEENMQEQPSVR). A compositionally biased stretch (acidic residues) spans 81–91 (ELDSDDEEENM). A Helicase ATP-binding domain is found at 127–294 (MKAIRENPVV…FATSSAFPPV (168 aa)). 140 to 147 (GETGCGKT) serves as a coordination point for ATP. The DEAH box signature appears at 240–243 (DEVH). One can recognise a Helicase C-terminal domain in the interval 354–526 (QSLQSYEEAK…NSVLKAKELE (173 aa)). Positions 937-1000 (ASAVTKGLQL…RLMPHELKRD (64 aa)) constitute a Tudor domain.

This sequence belongs to the DEAD box helicase family. DEAH subfamily.

The protein resides in the cytoplasm. It carries out the reaction ATP + H2O = ADP + phosphate + H(+). In terms of biological role, probable ATP-binding RNA helicase which plays a central role during spermatogenesis and oogenesis by repressing transposable elements and preventing their mobilization, which is essential for the germline integrity. Acts via the piRNA metabolic process, which mediates the repression of transposable elements during meiosis by forming complexes composed of piRNAs and Piwi and govern the methylation and subsequent repression of transposons. Involved in the repression of LTR retrotransposon copia. Also involved in telomere regulation by repressing specialized telomeric retroelements HeT-A, TAHRE, and TART; Drosophila telomeres being maintained by transposition of specialized telomeric retroelements. Involved in telomeric trans-silencing, a repression mechanism by which a transposon or a transgene inserted in subtelomeric heterochromatin has the capacity to repress in trans in the female germline, a homologous transposon, or transgene located in euchromatin. Involved in the repression of testis-expressed Stellate genes by the homologous Su(Ste) repeats. Required for anteroposterior and dorsoventral axis formation during oogenesis. The sequence is that of Probable ATP-dependent RNA helicase spindle-E (spn-E) from Drosophila virilis (Fruit fly).